A 272-amino-acid polypeptide reads, in one-letter code: Shikimate dehydrogenase (NADP(+)) (272 aa).

Residues 14 to 16 and T61 contribute to the shikimate site; that span reads SKS. Catalysis depends on K65, which acts as the Proton acceptor. E77 serves as a coordination point for NADP(+). Residues N86 and D102 each coordinate shikimate. NADP(+)-binding positions include 126–130, 149–154, and M213; these read GAGGA and NRTVSR. Y215 provides a ligand contact to shikimate. G237 provides a ligand contact to NADP(+).

This sequence belongs to the shikimate dehydrogenase family. In terms of assembly, homodimer.

It catalyses the reaction shikimate + NADP(+) = 3-dehydroshikimate + NADPH + H(+). The protein operates within metabolic intermediate biosynthesis; chorismate biosynthesis; chorismate from D-erythrose 4-phosphate and phosphoenolpyruvate: step 4/7. In terms of biological role, involved in the biosynthesis of the chorismate, which leads to the biosynthesis of aromatic amino acids. Catalyzes the reversible NADPH linked reduction of 3-dehydroshikimate (DHSA) to yield shikimate (SA). The sequence is that of Shikimate dehydrogenase (NADP(+)) from Escherichia coli O157:H7.